A 293-amino-acid chain; its full sequence is Acidic endochitinase (293 aa).

The N-terminal stretch at 1–22 (MEKCFNIIPSLLLISLLIKSSN) is a signal peptide. One can recognise a GH18 domain in the interval 24–293 (AGIAVYWGQN…GYSNAIKGSV (270 aa)). 2 disulfide bridges follow: Cys-43-Cys-90 and Cys-73-Cys-80. Catalysis depends on Glu-150, which acts as the Proton donor. A disulfide bridge connects residues Cys-179 and Cys-208.

It belongs to the glycosyl hydrolase 18 family. Chitinase class II subfamily.

It is found in the secreted. The protein resides in the extracellular space. It catalyses the reaction Random endo-hydrolysis of N-acetyl-beta-D-glucosaminide (1-&gt;4)-beta-linkages in chitin and chitodextrins.. In terms of biological role, this protein functions as a defense against chitin containing fungal pathogens. This is Acidic endochitinase from Cicer arietinum (Chickpea).